We begin with the raw amino-acid sequence, 238 residues long: D/L-lactic acid transporter (238 aa).

The next 2 membrane-spanning stretches (helical) occupy residues 2-22 (VHQL…GVGV) and 39-59 (IFAI…FGNV). The short motif at 62-64 (NPA) is the NPA 1 element. 3 consecutive transmembrane segments (helical) span residues 80-100 (FIPY…IVWI), 135-155 (FFVE…ISEI), and 158-178 (PGIV…GLGG). The short motif at 185–187 (NLA) is the NPA 2 element. Residues 211–231 (YGIIVPGIAPFVGAAIAAWFM) form a helical membrane-spanning segment.

Belongs to the MIP/aquaporin (TC 1.A.8) family.

It is found in the cell membrane. Transporter that facilitates the transmembrane diffusion of D/L-lactic acid. Is involved in the cellular racemization of lactate and lactate metabolism. The transported molecule is indeed lactic acid and not the lactate anion, in agreement with the assumption that, with very few exceptions, MIPs (major intrinsic proteins) only facilitate the transport of uncharged solutes. Also facilitates urea and H(2)O(2) diffusion across membranes, but is not permeable to water, glycerol and dihydroxyacetone. The chain is D/L-lactic acid transporter from Lactiplantibacillus plantarum (strain ATCC BAA-793 / NCIMB 8826 / WCFS1) (Lactobacillus plantarum).